The sequence spans 419 residues: Dual specificity mitogen-activated protein kinase kinase 7 (419 aa).

At Ala2 the chain carries N-acetylalanine. Positions 2–30 (AASSLEQKLSRLEAKLKQENREARRRIDL) form a coiled coil. Residues 18–30 (KQENREARRRIDL) are compositionally biased toward basic and acidic residues. The tract at residues 18 to 76 (KQENREARRRIDLNLDISPQRPRPTLQLPLANDGGSRSPSSESSPQHPTPPARPRHMLG) is disordered. Low complexity predominate over residues 36 to 63 (PQRPRPTLQLPLANDGGSRSPSSESSPQ). The interval 37–57 (QRPRPTLQLPLANDGGSRSPS) is d domain. The Protein kinase domain maps to 120–380 (LENLGEMGSG…YNKLLEHSFI (261 aa)). Residues 126–134 (MGSGTCGQV) and Lys149 contribute to the ATP site. The active-site Proton acceptor is Asp243. The residue at position 271 (Ser271) is a Phosphoserine; by MAP3K. The residue at position 275 (Thr275) is a Phosphothreonine; by MAP3K. The interval 377-400 (HSFIKRYETLEVDVASWFKDVMAK) is DVD domain. The residue at position 411 (Ser411) is a Phosphoserine.

It belongs to the protein kinase superfamily. STE Ser/Thr protein kinase family. MAP kinase kinase subfamily. Interacts with isoform 1 of VRK2. Interacts (via its D domain) with its substrates MAPK8/JNK1, MAPK9/JNK2 and MAPK10/JNK3. Interacts (via its DVD domain) with MAP3Ks activators like MAP3K5/ASK1 and MAP3K1/MEKK1. Interacts with MAPK8IP1/JIP1, MAPK8IP2/JIP2 and MAPK8IP3/JIP3 scaffold proteins. Interacts with RASSF7, the interaction promotes phosphorylation. Found in a complex with SH3RF1, RAC1, MAP3K11/MLK3, MAPK8IP1/JIP1 and MAPK8/JNK1. Found in a complex with SH3RF1, RAC2, MAP3K7/TAK1, MAPK8IP1/JIP1, MAPK8/JNK1 and MAPK9/JNK2. It depends on Mg(2+) as a cofactor. In terms of processing, activated by phosphorylation on Ser-271 and Thr-275 by MAP kinase kinase kinases (MAP3Ks). As to expression, ubiquitous; with highest level of expression in skeletal muscle. Isoform 3 is found at low levels in placenta, fetal liver, and skeletal muscle.

It is found in the nucleus. The protein resides in the cytoplasm. It catalyses the reaction L-seryl-[protein] + ATP = O-phospho-L-seryl-[protein] + ADP + H(+). The enzyme catalyses L-threonyl-[protein] + ATP = O-phospho-L-threonyl-[protein] + ADP + H(+). The catalysed reaction is L-tyrosyl-[protein] + ATP = O-phospho-L-tyrosyl-[protein] + ADP + H(+). Activated by phosphorylation by specific MAP kinase kinase kinases such as MAP3K1/MEKK1, MAP3K3/MEKK3, MAP3K11/MLK3 and MAP3K12/DLK. Dual specificity protein kinase which acts as an essential component of the MAP kinase signal transduction pathway. Essential component of the stress-activated protein kinase/c-Jun N-terminal kinase (SAP/JNK) signaling pathway. With MAP2K4/MKK4, is the one of the only known kinase to directly activate the stress-activated protein kinase/c-Jun N-terminal kinases MAPK8/JNK1, MAPK9/JNK2 and MAPK10/JNK3. MAP2K4/MKK4 and MAP2K7/MKK7 both activate the JNKs by phosphorylation, but they differ in their preference for the phosphorylation site in the Thr-Pro-Tyr motif. MAP2K4/MKK4 shows preference for phosphorylation of the Tyr residue and MAP2K7/MKK7 for the Thr residue. The monophosphorylation of JNKs on the Thr residue is sufficient to increase JNK activity indicating that MAP2K7/MKK7 is important to trigger JNK activity, while the additional phosphorylation of the Tyr residue by MAP2K4/MKK4 ensures optimal JNK activation. Has a specific role in JNK signal transduction pathway activated by pro-inflammatory cytokines. The MKK/JNK signaling pathway is also involved in mitochondrial death signaling pathway, including the release cytochrome c, leading to apoptosis. Part of a non-canonical MAPK signaling pathway, composed of the upstream MAP3K12 kinase and downstream MAP kinases MAPK1/ERK2 and MAPK3/ERK1, that enhances the AP-1-mediated transcription of APP in response to APOE. In Homo sapiens (Human), this protein is Dual specificity mitogen-activated protein kinase kinase 7 (MAP2K7).